The following is a 487-amino-acid chain: Ribosome biogenesis protein YTM1 (487 aa).

Positions 13–95 are ubiquitin-like (UBL) domain; the sequence is VKVTFTTNEA…ETNLTLQYVR (83 aa). WD repeat units lie at residues 122 to 161, 168 to 206, 217 to 256, 379 to 419, and 451 to 487; these read SPAG…LVTA, GHSA…ASGQ, GHRA…SPEA, GHTN…PASG, and GEGA…VVRE. The segment at 253-277 is disordered; the sequence is SPEADASLLPNAHTSKRRKVASSVT.

Belongs to the WD repeat WDR12/YTM1 family. In terms of assembly, component of the NOP7 complex, composed of ERB1, NOP7 and YTM1. The complex is held together by ERB1, which interacts with NOP7 via its N-terminal domain and with YTM1 via a high-affinity interaction between the seven-bladed beta-propeller domains of the 2 proteins. The NOP7 complex associates with the 66S pre-ribosome. Interacts (via UBL domain) with MDN1 (via VWFA/MIDAS domain).

The protein localises to the nucleus. The protein resides in the nucleolus. It is found in the nucleoplasm. Its function is as follows. Component of the NOP7 complex, which is required for maturation of the 25S and 5.8S ribosomal RNAs and formation of the 60S ribosome. The protein is Ribosome biogenesis protein YTM1 of Podospora anserina (strain S / ATCC MYA-4624 / DSM 980 / FGSC 10383) (Pleurage anserina).